The primary structure comprises 300 residues: Arrestin domain-containing protein 4 (300 aa).

2 consecutive short sequence motifs (PPxY motif) follow at residues 231 to 234 and 276 to 279; these read PPNY and PPLY.

This sequence belongs to the arrestin family. In terms of assembly, interacts with ADRB2. Interacts (via PPxY motifs) with ITCH, NEDD4L and WWP2. Interacts with AVPR2. Identified in a complex containing at least ARRDC4, AVPR2 and HGS. Interacts with SLC11A2; controls the incorporation of SLC11A2 into extracellular vesicles through an ubiquitination-dependent mechanism. Interacts with TRIM65.

It is found in the early endosome. Its subcellular location is the cell membrane. The protein localises to the cytoplasmic vesicle. In terms of biological role, functions as an adapter recruiting ubiquitin-protein ligases to their specific substrates. Plays a role in endocytosis of activated G protein-coupled receptors (GPCRs) Through an ubiquitination-dependent mechanism also plays a role in the incorporation of SLC11A2 into extracellular vesicles. May play a role in glucose uptake. Participates in innate immune response by promoting IFIH1/MDA5 activation through interaction with TRIM65. This Rattus norvegicus (Rat) protein is Arrestin domain-containing protein 4 (Arrdc4).